The chain runs to 162 residues: ATP synthase subunit b (162 aa).

A helical membrane pass occupies residues 4-24; sequence INWGSIIYQLIAFCVLLWLLS.

This sequence belongs to the ATPase B chain family. F-type ATPases have 2 components, F(1) - the catalytic core - and F(0) - the membrane proton channel. F(1) has five subunits: alpha(3), beta(3), gamma(1), delta(1), epsilon(1). F(0) has three main subunits: a(1), b(2) and c(10-14). The alpha and beta chains form an alternating ring which encloses part of the gamma chain. F(1) is attached to F(0) by a central stalk formed by the gamma and epsilon chains, while a peripheral stalk is formed by the delta and b chains.

Its subcellular location is the cell membrane. Its function is as follows. F(1)F(0) ATP synthase produces ATP from ADP in the presence of a proton or sodium gradient. F-type ATPases consist of two structural domains, F(1) containing the extramembraneous catalytic core and F(0) containing the membrane proton channel, linked together by a central stalk and a peripheral stalk. During catalysis, ATP synthesis in the catalytic domain of F(1) is coupled via a rotary mechanism of the central stalk subunits to proton translocation. In terms of biological role, component of the F(0) channel, it forms part of the peripheral stalk, linking F(1) to F(0). This is ATP synthase subunit b from Halalkalibacterium halodurans (strain ATCC BAA-125 / DSM 18197 / FERM 7344 / JCM 9153 / C-125) (Bacillus halodurans).